The chain runs to 378 residues: Succinyl-diaminopimelate desuccinylase (378 aa).

His68 is a Zn(2+) binding site. The active site involves Asp70. Residue Asp101 participates in Zn(2+) binding. The active-site Proton acceptor is Glu135. Positions 136, 164, and 350 each coordinate Zn(2+).

This sequence belongs to the peptidase M20A family. DapE subfamily. In terms of assembly, homodimer. It depends on Zn(2+) as a cofactor. Co(2+) serves as cofactor.

The enzyme catalyses N-succinyl-(2S,6S)-2,6-diaminopimelate + H2O = (2S,6S)-2,6-diaminopimelate + succinate. Its pathway is amino-acid biosynthesis; L-lysine biosynthesis via DAP pathway; LL-2,6-diaminopimelate from (S)-tetrahydrodipicolinate (succinylase route): step 3/3. In terms of biological role, catalyzes the hydrolysis of N-succinyl-L,L-diaminopimelic acid (SDAP), forming succinate and LL-2,6-diaminopimelate (DAP), an intermediate involved in the bacterial biosynthesis of lysine and meso-diaminopimelic acid, an essential component of bacterial cell walls. The protein is Succinyl-diaminopimelate desuccinylase of Vibrio campbellii (strain ATCC BAA-1116).